Consider the following 155-residue polypeptide: Transcriptional repressor NrdR (155 aa).

Residues 3 to 34 (CPFCGHSSTQVLDSRVSEDGDTVRRRRRCEAC) fold into a zinc finger. In terms of domain architecture, ATP-cone spans 49–139 (PAIVKKNGSR…VYRSFEDVSE (91 aa)).

This sequence belongs to the NrdR family. Requires Zn(2+) as cofactor.

Functionally, negatively regulates transcription of bacterial ribonucleotide reductase nrd genes and operons by binding to NrdR-boxes. In Cupriavidus metallidurans (strain ATCC 43123 / DSM 2839 / NBRC 102507 / CH34) (Ralstonia metallidurans), this protein is Transcriptional repressor NrdR.